Reading from the N-terminus, the 148-residue chain is FAD synthase (148 aa).

ATP-binding positions include 5–6 (TF), 10–13 (HPGH), D92, and Y119.

The protein belongs to the archaeal FAD synthase family. Homodimer. A divalent metal cation serves as cofactor.

It catalyses the reaction FMN + ATP + H(+) = FAD + diphosphate. It participates in cofactor biosynthesis; FAD biosynthesis; FAD from FMN: step 1/1. Catalyzes the transfer of the AMP portion of ATP to flavin mononucleotide (FMN) to produce flavin adenine dinucleotide (FAD) coenzyme. The sequence is that of FAD synthase from Methanosphaera stadtmanae (strain ATCC 43021 / DSM 3091 / JCM 11832 / MCB-3).